Consider the following 379-residue polypeptide: Protein OSCP1 (379 aa).

Predominantly expressed in testis.

The protein resides in the basal cell membrane. Functionally, may be involved in drug clearance in the placenta. This chain is Protein OSCP1 (Oscp1), found in Mus musculus (Mouse).